The following is a 176-amino-acid chain: NAD(P)H-quinone oxidoreductase subunit 6, chloroplastic (176 aa).

Helical transmembrane passes span F10–T30, P32–L52, A61–M81, V95–I115, and F152–A172.

It belongs to the complex I subunit 6 family. As to quaternary structure, NDH is composed of at least 16 different subunits, 5 of which are encoded in the nucleus.

It localises to the plastid. Its subcellular location is the chloroplast thylakoid membrane. It carries out the reaction a plastoquinone + NADH + (n+1) H(+)(in) = a plastoquinol + NAD(+) + n H(+)(out). The catalysed reaction is a plastoquinone + NADPH + (n+1) H(+)(in) = a plastoquinol + NADP(+) + n H(+)(out). In terms of biological role, NDH shuttles electrons from NAD(P)H:plastoquinone, via FMN and iron-sulfur (Fe-S) centers, to quinones in the photosynthetic chain and possibly in a chloroplast respiratory chain. The immediate electron acceptor for the enzyme in this species is believed to be plastoquinone. Couples the redox reaction to proton translocation, and thus conserves the redox energy in a proton gradient. This is NAD(P)H-quinone oxidoreductase subunit 6, chloroplastic (ndhG) from Manihot esculenta (Cassava).